We begin with the raw amino-acid sequence, 133 residues long: Holo-[acyl-carrier-protein] synthase (133 aa).

Mg(2+)-binding residues include D8 and E58.

Belongs to the P-Pant transferase superfamily. AcpS family. It depends on Mg(2+) as a cofactor.

It localises to the cytoplasm. The catalysed reaction is apo-[ACP] + CoA = holo-[ACP] + adenosine 3',5'-bisphosphate + H(+). Its function is as follows. Transfers the 4'-phosphopantetheine moiety from coenzyme A to a Ser of acyl-carrier-protein. The chain is Holo-[acyl-carrier-protein] synthase from Sphingopyxis alaskensis (strain DSM 13593 / LMG 18877 / RB2256) (Sphingomonas alaskensis).